A 555-amino-acid chain; its full sequence is Potassium-transporting ATPase potassium-binding subunit (555 aa).

10 consecutive transmembrane segments (helical) span residues 2-22 (IWVAVVITMLLFILVAKPTGI), 60-80 (QYALSLVLLNGFMIVVVYFIF), 130-150 (IGITFLMFAAPATTLALVMAF), 173-193 (VFLPIAFVTALVFVALGVPQT), 246-266 (MSNILQMMLMMLLPTALPFTY), 278-298 (ILFVSLFMVFLLGFITITTSE), 374-394 (AGFVNIITYAIIAVFISGLMV), 412-432 (LIAVTILFHPLLILGFSALAL), 483-503 (LVMFLGRYFSLVTMLAVAASL), and 525-545 (GIFIGTIVIVGALTFFPMLVL).

Belongs to the KdpA family. As to quaternary structure, the system is composed of three essential subunits: KdpA, KdpB and KdpC.

It is found in the cell membrane. Functionally, part of the high-affinity ATP-driven potassium transport (or Kdp) system, which catalyzes the hydrolysis of ATP coupled with the electrogenic transport of potassium into the cytoplasm. This subunit binds the extracellular potassium ions and delivers the ions to the membrane domain of KdpB through an intramembrane tunnel. The protein is Potassium-transporting ATPase potassium-binding subunit of Bacillus thuringiensis subsp. konkukian (strain 97-27).